A 291-amino-acid polypeptide reads, in one-letter code: Acetyl-coenzyme A carboxylase carboxyl transferase subunit beta (291 aa).

One can recognise a CoA carboxyltransferase N-terminal domain in the interval 29-291; it reads IMTKCPDCKK…TGGDLEWLEN (263 aa). Zn(2+)-binding residues include Cys33, Cys36, Cys52, and Cys55. The C4-type zinc finger occupies 33–55; that stretch reads CPDCKKIMLTKELDKNLRVCMNC.

Belongs to the AccD/PCCB family. Acetyl-CoA carboxylase is a heterohexamer composed of biotin carboxyl carrier protein (AccB), biotin carboxylase (AccC) and two subunits each of ACCase subunit alpha (AccA) and ACCase subunit beta (AccD). The cofactor is Zn(2+).

The protein resides in the cytoplasm. It catalyses the reaction N(6)-carboxybiotinyl-L-lysyl-[protein] + acetyl-CoA = N(6)-biotinyl-L-lysyl-[protein] + malonyl-CoA. Its pathway is lipid metabolism; malonyl-CoA biosynthesis; malonyl-CoA from acetyl-CoA: step 1/1. Its function is as follows. Component of the acetyl coenzyme A carboxylase (ACC) complex. Biotin carboxylase (BC) catalyzes the carboxylation of biotin on its carrier protein (BCCP) and then the CO(2) group is transferred by the transcarboxylase to acetyl-CoA to form malonyl-CoA. In Bacillus licheniformis (strain ATCC 14580 / DSM 13 / JCM 2505 / CCUG 7422 / NBRC 12200 / NCIMB 9375 / NCTC 10341 / NRRL NRS-1264 / Gibson 46), this protein is Acetyl-coenzyme A carboxylase carboxyl transferase subunit beta.